A 226-amino-acid chain; its full sequence is Thiopurine S-methyltransferase (226 aa).

S-adenosyl-L-methionine-binding residues include tryptophan 16, methionine 51, glutamate 72, and arginine 131.

Belongs to the class I-like SAM-binding methyltransferase superfamily. TPMT family.

Its subcellular location is the cytoplasm. It catalyses the reaction S-adenosyl-L-methionine + a thiopurine = S-adenosyl-L-homocysteine + a thiopurine S-methylether.. The polypeptide is Thiopurine S-methyltransferase (Francisella tularensis subsp. tularensis (strain SCHU S4 / Schu 4)).